Reading from the N-terminus, the 722-residue chain is Polymerase basic protein 2 (722 aa).

The RNA polymerase is composed of three subunits: PB1, PB2 and PA.

It is found in the virion. The protein resides in the host nucleus. Its function is as follows. Involved in transcription initiation and cap-stealing mechanism, in which cellular capped pre-mRNA are used to generate primers for viral transcription. Binds the cap of the target pre-RNA which is subsequently cleaved by PB1. May play a role in genome replication. This is Polymerase basic protein 2 from Gadus morhua (Atlantic cod).